A 142-amino-acid polypeptide reads, in one-letter code: Small ribosomal subunit protein uS12 (142 aa).

Residues 1–30 (MGKTRGMGAARKLKNHRRRQRWADKSYKKS) are disordered. The segment covering 11–20 (RKLKNHRRRQ) has biased composition (basic residues). Positions 21–30 (RWADKSYKKS) are enriched in basic and acidic residues. Residue Pro61 is modified to Hydroxyproline.

This sequence belongs to the universal ribosomal protein uS12 family.

This Fragaria ananassa (Strawberry) protein is Small ribosomal subunit protein uS12 (RPS23).